Reading from the N-terminus, the 584-residue chain is MNKNCDYCGLTIYSETYHKCVESSVKINDETKIVNYKIITIDELGILAGKNDREAQDEIVYRYLNQDAINLSQKNIKPINWENIIERAIDDQYFTYFLLFFAFDHDEYHVIFDVLFDVLFENVKLAAKTGDSMAQYNLGQMYYRGISTKKNIQKAIKWITKSADQNNKYGLINLARFYEYGDGVLLDIDKATQLLEQASCQNFSKAQFYLGRIYMYKDPPDYKLAFKYYQQAANQNHSSAQYFIAVFYKTGKCVAQDYKKAVHWLTLAASQGLNSAKIKLAEMYMKGIDVEQNYHKAFELLNSSIYDDGTNNYYDEVAMTELACMYKRGLGIEKNISKAIYLHIKSRNTKNIFKIFEINTITFINPINVDCENNNLSDIDQLESKIIYKLQFLMIKLKYEWSNIYHDDISNSLQEIENSFTRLIKLRIQLNNSSAMINCLSFKKNTSYKFDVFNTKNAYVNYYVYDDISYINIGLNNIKLVNNFQKNLDKFMFCNIFLDLELALENKHKEKIDDLINAVKNDDRSHQLNIVKDLDNIKFVLSQTKKISSKLIGYVNILMNDLKSNTHIRNQQFQLEYANIFGYD.

Sel1-like repeat units lie at residues serine 132 to asparagine 167, lysine 168 to phenylalanine 203, serine 204 to histidine 237, serine 238 to leucine 273, asparagine 274 to glycine 309, and glutamate 316 to asparagine 351.

This chain is Putative sel1-like repeat-containing protein L18, found in Acanthamoeba polyphaga (Amoeba).